Here is a 228-residue protein sequence, read N- to C-terminus: RNA pyrophosphohydrolase (228 aa).

The segment at 1–70 (MEKRSGIGRL…KQWVKMMNDI (70 aa)) is unknown. The segment at 71 to 228 (VIDKRGFRLG…VLTEFAEFIR (158 aa)) is rppH domain. Positions 76–221 (GFRLGVGMVI…KRDVYQKVLT (146 aa)) constitute a Nudix hydrolase domain. A Nudix box motif is present at residues 109-130 (GGLLPNETLREALNRELDEEVG).

The protein in the C-terminal section; belongs to the Nudix hydrolase family. RppH subfamily. A divalent metal cation is required as a cofactor.

Its function is as follows. Accelerates the degradation of transcripts by removing pyrophosphate from the 5'-end of triphosphorylated RNA, leading to a more labile monophosphorylated state that can stimulate subsequent ribonuclease cleavage. This is RNA pyrophosphohydrolase from Coxiella burnetii (strain RSA 493 / Nine Mile phase I).